The chain runs to 134 residues: Large ribosomal subunit protein bL20 (134 aa).

It belongs to the bacterial ribosomal protein bL20 family.

Functionally, binds directly to 23S ribosomal RNA and is necessary for the in vitro assembly process of the 50S ribosomal subunit. It is not involved in the protein synthesizing functions of that subunit. This Sinorhizobium fredii (strain NBRC 101917 / NGR234) protein is Large ribosomal subunit protein bL20.